The sequence spans 523 residues: Anthranilate synthase component 1 (523 aa).

L-tryptophan is bound by residues serine 45 and 296 to 298; that span reads PYM. 333–334 provides a ligand contact to chorismate; that stretch reads GT. Glutamate 366 is a Mg(2+) binding site. Chorismate contacts are provided by residues tyrosine 454, arginine 474, 488 to 490, and glycine 490; that span reads GAG. Glutamate 503 lines the Mg(2+) pocket.

Belongs to the anthranilate synthase component I family. In terms of assembly, heterotetramer consisting of two non-identical subunits: a beta subunit (TrpG) and a large alpha subunit (TrpE). Requires Mg(2+) as cofactor.

It catalyses the reaction chorismate + L-glutamine = anthranilate + pyruvate + L-glutamate + H(+). It participates in amino-acid biosynthesis; L-tryptophan biosynthesis; L-tryptophan from chorismate: step 1/5. Its activity is regulated as follows. Feedback inhibited by tryptophan. In terms of biological role, part of a heterotetrameric complex that catalyzes the two-step biosynthesis of anthranilate, an intermediate in the biosynthesis of L-tryptophan. In the first step, the glutamine-binding beta subunit (TrpG) of anthranilate synthase (AS) provides the glutamine amidotransferase activity which generates ammonia as a substrate that, along with chorismate, is used in the second step, catalyzed by the large alpha subunit of AS (TrpE) to produce anthranilate. In the absence of TrpG, TrpE can synthesize anthranilate directly from chorismate and high concentrations of ammonia. The polypeptide is Anthranilate synthase component 1 (trpE) (Vibrio cholerae serotype O1 (strain ATCC 39315 / El Tor Inaba N16961)).